The sequence spans 1162 residues: MGKRFTEYSQFDLSQVNKDVLKKWDENQVFAKSMTERDGCPSFVFFEGPPSANGMPGIHHVMARTIKDIFCRYKTMKGYQVKRKAGWDTHGLPVELSVEKALGITKEDIGKKISVADYNAACRKDVMKYTKEWEDLTHQMGYWVDMKHPYITYDNRYIETLWWLLKQLHKKGLLYKGYTIQPYSPAAGTGLSSHELNQPGCYRDVKDTTAVAQFKMKNPKPEMAEWGTPYFLAWTTTPWTLPSNTALCVGPKIDYVAVQTYNAYTGEPITVVLAKALLNTHFNSKAADLKLEDYKAGDKLVPFKVVAEYKGADLIGMEYEQLIPWVKPVEVSEDGTWKVSGKGFRVIPGDYVTTEDGTGIVHIAPTFGADDANVARAAGIPSLFMINKKGETRPMVDLTGKFYMLDELDENFVKECVDVDKYKEYQGAWVKNAYNPVFMVDGKYDEKAAQAAESLDVALCMMMKANNQAFKIEKHIHNYPHCWRTDKPVLYYPLDSWFIRSTACKERMMELNKTINWKPESTGTGRFGKWLENLNDWNLSRSRYWGTPLPIWRTEDGTSEICIESVEELYNEIEKSVAAGFMKSNPYKDKGFVPGEYTEGNYDKIDLHRPYVDDIILVSEDGQPMKRESDLIDVWFDSGAMPYAQIHYPFENKNILDNREVYPADFIAEGVDQTRGWFFTLHAIATMVFDSVSYKAVISNGLVLDKNGNKMSKRLNNAVDPFTTIEKYGSDPLRWYMITNSSPWDNLKFDIDGIEEVRRKFFGTLYNTYSFFALYANVDGFEYKEADVPMAERPEIDRWILSVLNTLIKEVDTCYNEYEPTKAGRLISDFVNDNLSNWYVRLNRKRFWGGEFTQDKLSAYQTLYTCLETVAKLMAPISPFYADRLYTDLTTATGRDNVVSIHLAEFPKYQEEMIDKELEARMQMAQDVTSMVLALRRKVNIKVRQPLQCIMIPVADEEQKAHIEAVKALIMNEVNVKDIKFVDGAAGVLVKKVKCDFKKLGPKFGKQMKAVAAAVAEMSQEAIAELEKNGKYALNLDGAEAVIEAADVEIFSEDIPGWLVANEGKLTVALEVTVTEELRREGIARELVNRIQNIRKSSGFEITDKIKITISKNTQTDDAVNEYNTYICNQVLGTSLDLADEVKDGTELNFDDFSLFVNVIKD.

The 'HIGH' region motif lies at 50–60 (PSANGMPGIHH). Residues 710 to 714 (KMSKR) carry the 'KMSKS' region motif. K713 provides a ligand contact to ATP.

It belongs to the class-I aminoacyl-tRNA synthetase family. IleS type 2 subfamily. In terms of assembly, monomer. Zn(2+) is required as a cofactor.

It is found in the cytoplasm. It catalyses the reaction tRNA(Ile) + L-isoleucine + ATP = L-isoleucyl-tRNA(Ile) + AMP + diphosphate. Its function is as follows. Catalyzes the attachment of isoleucine to tRNA(Ile). As IleRS can inadvertently accommodate and process structurally similar amino acids such as valine, to avoid such errors it has two additional distinct tRNA(Ile)-dependent editing activities. One activity is designated as 'pretransfer' editing and involves the hydrolysis of activated Val-AMP. The other activity is designated 'posttransfer' editing and involves deacylation of mischarged Val-tRNA(Ile). This is Isoleucine--tRNA ligase from Bacteroides thetaiotaomicron (strain ATCC 29148 / DSM 2079 / JCM 5827 / CCUG 10774 / NCTC 10582 / VPI-5482 / E50).